Reading from the N-terminus, the 591-residue chain is Adenine deaminase (591 aa).

It belongs to the metallo-dependent hydrolases superfamily. Adenine deaminase family. As to quaternary structure, homodimer. Mn(2+) is required as a cofactor.

It carries out the reaction adenine + H2O + H(+) = hypoxanthine + NH4(+). The sequence is that of Adenine deaminase from Edwardsiella ictaluri (strain 93-146).